The sequence spans 868 residues: Thiol protease/hemagglutinin PrtT (868 aa).

The first 27 residues, 1-27 (MKRIFYTLGLLLLCLPMLQAGPVTRSK), serve as a signal peptide directing secretion. Catalysis depends on residues Cys184 and His327.

It belongs to the peptidase C10 family.

In terms of biological role, appears to be specific for arginine-containing peptide bonds. Possesses hemagglutinin activity. The sequence is that of Thiol protease/hemagglutinin PrtT (prtT) from Porphyromonas gingivalis (Bacteroides gingivalis).